We begin with the raw amino-acid sequence, 123 residues long: Large ribosomal subunit protein uL29 (123 aa).

Belongs to the universal ribosomal protein uL29 family.

The chain is Large ribosomal subunit protein uL29 (RPL35) from Theileria parva (East coast fever infection agent).